Consider the following 188-residue polypeptide: Ubiquitin-like protein 4B (188 aa).

A Ubiquitin-like domain is found at Met-1–Asp-76. Residues Glu-146–Gln-188 are disordered. The segment covering Asn-161–Gly-174 has biased composition (gly residues).

In terms of tissue distribution, expressed specifically in post-meiotic male germ cells of the testis. Abundantly expressed in stage 14-16 spermatids.

Its subcellular location is the cytoplasm. The polypeptide is Ubiquitin-like protein 4B (Ubl4b) (Mus musculus (Mouse)).